A 258-amino-acid chain; its full sequence is 5'-nucleotidase SurE (258 aa).

A divalent metal cation-binding residues include Asp9, Asp10, Ser42, and Asn96.

It belongs to the SurE nucleotidase family. A divalent metal cation is required as a cofactor.

Its subcellular location is the cytoplasm. It carries out the reaction a ribonucleoside 5'-phosphate + H2O = a ribonucleoside + phosphate. In terms of biological role, nucleotidase that shows phosphatase activity on nucleoside 5'-monophosphates. The protein is 5'-nucleotidase SurE of Campylobacter jejuni subsp. jejuni serotype O:6 (strain 81116 / NCTC 11828).